Reading from the N-terminus, the 484-residue chain is Folate synthesis bifunctional protein (484 aa).

Residues 15 to 141 are HPPK; sequence VIALGSNVGN…PFVLAPLVDL (127 aa). The Pterin-binding domain maps to 202–470; sequence TYVMGILNLT…NVRDNVDAAR (269 aa). A DHPS region spans residues 204-484; sequence VMGILNLTPD…MMTKRFKNVD (281 aa). Position 209 (asparagine 209) interacts with Mg(2+). (7,8-dihydropterin-6-yl)methyl diphosphate contacts are provided by residues threonine 249, aspartate 286, asparagine 305, aspartate 378, lysine 423, and 458–460; that span reads RVH.

The protein in the N-terminal section; belongs to the HPPK family. In the C-terminal section; belongs to the DHPS family. The cofactor is Mg(2+). In terms of tissue distribution, expressed exclusively in reproductive tissues.

Its subcellular location is the cytoplasm. The protein localises to the cytosol. It carries out the reaction 6-hydroxymethyl-7,8-dihydropterin + ATP = (7,8-dihydropterin-6-yl)methyl diphosphate + AMP + H(+). The enzyme catalyses (7,8-dihydropterin-6-yl)methyl diphosphate + 4-aminobenzoate = 7,8-dihydropteroate + diphosphate. Its pathway is cofactor biosynthesis; tetrahydrofolate biosynthesis; 2-amino-4-hydroxy-6-hydroxymethyl-7,8-dihydropteridine diphosphate from 7,8-dihydroneopterin triphosphate: step 4/4. It functions in the pathway cofactor biosynthesis; tetrahydrofolate biosynthesis; 7,8-dihydrofolate from 2-amino-4-hydroxy-6-hydroxymethyl-7,8-dihydropteridine diphosphate and 4-aminobenzoate: step 1/2. Its activity is regulated as follows. Inhibited by sulfanilamide. In terms of biological role, catalyzes the first two consecutive steps of tetrahydrofolate biosynthesis. Plays a role in seed stress response and survival. The protein is Folate synthesis bifunctional protein of Arabidopsis thaliana (Mouse-ear cress).